The primary structure comprises 311 residues: Ornithine carbamoyltransferase (311 aa).

Carbamoyl phosphate-binding positions include 54-58, Asn-81, Arg-104, and 131-134; these read STRTR and HPCQ. Residues Asn-164, Asp-225, and 229–230 contribute to the L-ornithine site; that span reads DM. Carbamoyl phosphate-binding positions include 268-271, Thr-279, and Arg-297; that span reads HDMP.

This sequence belongs to the aspartate/ornithine carbamoyltransferase superfamily. OTCase family.

Its subcellular location is the cytoplasm. The catalysed reaction is carbamoyl phosphate + L-ornithine = L-citrulline + phosphate + H(+). It functions in the pathway amino-acid biosynthesis; L-arginine biosynthesis; L-arginine from L-ornithine and carbamoyl phosphate: step 1/3. Functionally, reversibly catalyzes the transfer of the carbamoyl group from carbamoyl phosphate (CP) to the N(epsilon) atom of ornithine (ORN) to produce L-citrulline. The polypeptide is Ornithine carbamoyltransferase (argF) (Leptospira interrogans serogroup Icterohaemorrhagiae serovar copenhageni (strain Fiocruz L1-130)).